A 357-amino-acid polypeptide reads, in one-letter code: uncharacterized protein (357 aa).

The first 19 residues, 1 to 19 (MKRILSFIFIILFFNSSYA), serve as a signal peptide directing secretion.

This is an uncharacterized protein from Rickettsia prowazekii (strain Madrid E).